The chain runs to 308 residues: Ribosomal RNA small subunit methyltransferase H (308 aa).

Residues 35–37 (GGH), Asp-54, Phe-80, Asp-101, and Gln-108 contribute to the S-adenosyl-L-methionine site.

The protein belongs to the methyltransferase superfamily. RsmH family.

Its subcellular location is the cytoplasm. It catalyses the reaction cytidine(1402) in 16S rRNA + S-adenosyl-L-methionine = N(4)-methylcytidine(1402) in 16S rRNA + S-adenosyl-L-homocysteine + H(+). Specifically methylates the N4 position of cytidine in position 1402 (C1402) of 16S rRNA. This is Ribosomal RNA small subunit methyltransferase H from Mycoplasma pneumoniae (strain ATCC 29342 / M129 / Subtype 1) (Mycoplasmoides pneumoniae).